The chain runs to 172 residues: Lipoprotein signal peptidase (172 aa).

4 consecutive transmembrane segments (helical) span residues 12 to 32 (TSAA…VILF), 43 to 63 (VFAY…LVYN), 77 to 97 (WQRW…CYLL), and 102 to 122 (GQKM…GNVI). Active-site residues include Asp-132 and Asp-150. A helical transmembrane segment spans residues 142–162 (HWPAFNLADSAITVGAVLLVL).

The protein belongs to the peptidase A8 family.

It localises to the cell inner membrane. It catalyses the reaction Release of signal peptides from bacterial membrane prolipoproteins. Hydrolyzes -Xaa-Yaa-Zaa-|-(S,diacylglyceryl)Cys-, in which Xaa is hydrophobic (preferably Leu), and Yaa (Ala or Ser) and Zaa (Gly or Ala) have small, neutral side chains.. The protein operates within protein modification; lipoprotein biosynthesis (signal peptide cleavage). Functionally, this protein specifically catalyzes the removal of signal peptides from prolipoproteins. The chain is Lipoprotein signal peptidase from Paraburkholderia phytofirmans (strain DSM 17436 / LMG 22146 / PsJN) (Burkholderia phytofirmans).